The chain runs to 530 residues: UDP-glucuronosyltransferase 2A3 (530 aa).

An N-terminal signal peptide occupies residues 1–23 (MAPGKLASAVLLLLLCCAGSGFC). Residues 24–494 (GKVLVWPCEM…SWFQYHSLDV (471 aa)) lie on the Extracellular side of the membrane. Asn-316 carries an N-linked (GlcNAc...) asparagine glycan. The chain crosses the membrane as a helical span at residues 495–515 (IGFLLACVASAILLVTKCCLF). Residues 516-530 (SFQNFIKIGKRIKKE) lie on the Cytoplasmic side of the membrane.

It belongs to the UDP-glycosyltransferase family. As to expression, specifically expressed in liver and small intestine.

It is found in the membrane. The enzyme catalyses glucuronate acceptor + UDP-alpha-D-glucuronate = acceptor beta-D-glucuronoside + UDP + H(+). In terms of biological role, UDP-glucuronosyltransferases catalyze phase II biotransformation reactions in which lipophilic substrates are conjugated with glucuronic acid to increase water solubility and enhance excretion. They are of major importance in the conjugation and subsequent elimination of potentially toxic xenobiotics and endogenous compounds. The polypeptide is UDP-glucuronosyltransferase 2A3 (UGT2A3) (Cavia porcellus (Guinea pig)).